The primary structure comprises 551 residues: Alkaline/neutral invertase CINV1 (551 aa).

The residue at position 1 (methionine 1) is an N-acetylmethionine. Phosphoserine is present on residues serine 11, serine 14, serine 44, and serine 61. Residues 50-74 (TGYSRHDGIHDSPRGRSVLDTPLSS) form a disordered region. The segment covering 53 to 63 (SRHDGIHDSPR) has biased composition (basic and acidic residues). The residue at position 70 (threonine 70) is a Phosphothreonine. Phosphoserine is present on serine 547.

The protein belongs to the glycosyl hydrolase 100 family. Forms homohexamers. Interacts with PIP5K9. Interaction with PIP5K9 represses CINV1 activity. Interacts with GRF1, GRF2, GRF3, GRF4, GRF5, GRF6, GRF7, GRF8 and GRF10; these interactions are dependent of the phosphorylation at Ser-547. In terms of processing, phosphorylated at Ser-547 by CPK3 and CPK21. In terms of tissue distribution, expressed in radicle, hypocotyls, root tips and vascular cylinder, leaf vasculature, shoot stipules, trichomes, stem, stigma apex and base of siliques.

The protein localises to the cytoplasm. The protein resides in the cytosol. Its subcellular location is the nucleus. It carries out the reaction Hydrolysis of terminal non-reducing beta-D-fructofuranoside residues in beta-D-fructofuranosides.. In terms of biological role, cytosolic invertase that specifically cleaves sucrose into glucose and fructose and is involved in the regulation of multiple tissue development including primary root elongation, root hair growth, leaf and silique development, and floral transition. Is involved in osmotic stress-induced inhibition on lateral root growth by controlling the concentration of hexose in cells. May regulate sugar-mediated root development by controlling sucrose catabolism in root cells. Contributes to carbon partitioning and cellulose biosynthesis in seedlings. This Arabidopsis thaliana (Mouse-ear cress) protein is Alkaline/neutral invertase CINV1.